The following is a 292-amino-acid chain: Homoserine kinase (292 aa).

Residue 84 to 94 participates in ATP binding; the sequence is PLARGMGSSSA.

Belongs to the GHMP kinase family. Homoserine kinase subfamily.

The protein localises to the cytoplasm. The enzyme catalyses L-homoserine + ATP = O-phospho-L-homoserine + ADP + H(+). Its pathway is amino-acid biosynthesis; L-threonine biosynthesis; L-threonine from L-aspartate: step 4/5. Catalyzes the ATP-dependent phosphorylation of L-homoserine to L-homoserine phosphate. This is Homoserine kinase from Campylobacter lari (strain RM2100 / D67 / ATCC BAA-1060).